A 198-amino-acid polypeptide reads, in one-letter code: Virion infectivity factor (198 aa).

The interval 76–115 (GERPWHLGHGIGLEWRQGKYSTQIDPETADQLIHTRYFTC) is RNA-binding. Residue threonine 97 is modified to Phosphothreonine; by host MAP4K1. The short motif at 109 to 140 (HTRYFTCFAAGAVRQAILGERILTFCHFQSGH) is the HCCH motif element. At threonine 145 the chain carries Phosphothreonine; by host. Residues 145-154 (TLQFLAFRKV) carry the BC-box-like motif motif. The segment at 152–170 (RKVVESQDKQPKGPRRPLP) is multimerization. The interval 159 to 198 (DKQPKGPRRPLPSVTKLTEDRWNKHRTTTGRRENHTLSGC) is disordered. Phosphoserine; by host MAP4K1 is present on serine 171. Residues 177-178 (ED) are membrane association. Residues 188–198 (GRRENHTLSGC) show a composition bias toward basic and acidic residues.

This sequence belongs to the primate lentivirus group Vif protein family. As to quaternary structure, homomultimer; in vitro and presumably in vivo. Interacts with viral Pr55Gag precursor, host APOBEC3G, UBCE7IP1 isoform 3/ZIN, ABCE1 and possibly with SAT. Forms an E3 ligase complex by interacting with host CUL5 and elongin BC complex (ELOB and ELOC). Highly phosphorylated on serine and threonine residues. Thr-97 and Ser-171 are phosphorylated by the mitogen activated kinase MAP4K1. In terms of processing, polyubiquitinated and degraded by the proteasome in the presence of APOBEC3G.

The protein resides in the host cytoplasm. The protein localises to the host cell membrane. It localises to the virion. Counteracts the innate antiviral activity of APOBEC3G. Forms a complex with host APOBEC3G thus preventing the entry of this lethally hypermutating enzyme into progeny virions. Functions as an adapter molecule, recruiting APOBEC3G to the ubiquitin-proteasome machinery. Targets APOBEC3G for degradation through the assembly with elongin BC complex, CUL5 and RBX1. Binds viral RNA and affects the stability of viral nucleoprotein core. May play a role in viral morphology. Interacts with host ABCE1, which seems to be involved in lentiviruses capsid formation and displays RNase L inhibitor activity. This interaction may play a role in protecting viral RNA from damage during viral assembly. May interact with host SAT, which is a regulator of polyamine cell level. This interaction may be relevant since polyamines affect viral RNA properties. The polypeptide is Virion infectivity factor (Pan troglodytes (Chimpanzee)).